A 449-amino-acid polypeptide reads, in one-letter code: Glutamate--tRNA ligase (449 aa).

A 'HIGH' region motif is present at residues Pro-10–Asn-20. The short motif at Lys-214–Arg-218 is the 'KMSKS' region element. Lys-217 contacts ATP.

Belongs to the class-I aminoacyl-tRNA synthetase family. Glutamate--tRNA ligase type 1 subfamily. Monomer.

The protein resides in the cytoplasm. It catalyses the reaction tRNA(Glu) + L-glutamate + ATP = L-glutamyl-tRNA(Glu) + AMP + diphosphate. Its function is as follows. Catalyzes the attachment of glutamate to tRNA(Glu) in a two-step reaction: glutamate is first activated by ATP to form Glu-AMP and then transferred to the acceptor end of tRNA(Glu). This chain is Glutamate--tRNA ligase, found in Onion yellows phytoplasma (strain OY-M).